The sequence spans 180 residues: Cytokinin-beta-glucosidase 4 (180 aa).

In terms of biological role, hydrolyzes cytokinin glucosides thus liberating free cytokinins. This chain is Cytokinin-beta-glucosidase 4 (ROLC4), found in Panax ginseng (Korean ginseng).